The primary structure comprises 210 residues: Outer-membrane lipoprotein LolB (210 aa).

An N-terminal signal peptide occupies residues 1-26; sequence MSKLKIDTKRRFSLLIALVLIISLSS. Cys-27 is lipidated: N-palmitoyl cysteine. A lipid anchor (S-diacylglycerol cysteine) is attached at Cys-27.

This sequence belongs to the LolB family. In terms of assembly, monomer.

It is found in the cell outer membrane. Functionally, plays a critical role in the incorporation of lipoproteins in the outer membrane after they are released by the LolA protein. The protein is Outer-membrane lipoprotein LolB of Francisella tularensis subsp. novicida (strain U112).